The primary structure comprises 181 residues: MTFDLTNAKERMKGAQEALQRELANIRTGRANPNILNRVEVEYYGAMTPLNQVASISVPEARILLITPFDKSALEAIVHAINVSDLGLNPASDGNIVRLAIPQMTEERRKELAKEVKAEAEKAKVSVRNVRRDIMDDIKKDKDMPEDDARKAEDQTQKLTDENIKAIDEIAAEKEKELLTI.

The interval 135–160 (MDDIKKDKDMPEDDARKAEDQTQKLT) is disordered.

This sequence belongs to the RRF family.

The protein resides in the cytoplasm. Functionally, responsible for the release of ribosomes from messenger RNA at the termination of protein biosynthesis. May increase the efficiency of translation by recycling ribosomes from one round of translation to another. The chain is Ribosome-recycling factor from Leuconostoc mesenteroides subsp. mesenteroides (strain ATCC 8293 / DSM 20343 / BCRC 11652 / CCM 1803 / JCM 6124 / NCDO 523 / NBRC 100496 / NCIMB 8023 / NCTC 12954 / NRRL B-1118 / 37Y).